A 184-amino-acid chain; its full sequence is Serine recombinase PinE (184 aa).

The region spanning 1 to 134 (MLIGYVRVST…AGLETARAQG (134 aa)) is the Resolvase/invertase-type recombinase catalytic domain. Residue Ser9 is the O-(5'-phospho-DNA)-serine intermediate of the active site. Positions 161–180 (RQKVAIIYDVGVSTLYKRFP) form a DNA-binding region, H-T-H motif.

This sequence belongs to the site-specific recombinase resolvase family.

This protein catalyzes the inversion of an 1800-bp E.coli DNA fragment, the P region, which can exist in either orientation. The function of the inversion is not yet clear. This Escherichia coli (strain K12) protein is Serine recombinase PinE (pinE).